We begin with the raw amino-acid sequence, 326 residues long: Putative nickel insertion protein (326 aa).

It belongs to the LarC family.

In Enterococcus faecalis (strain ATCC 700802 / V583), this protein is Putative nickel insertion protein.